Here is a 269-residue protein sequence, read N- to C-terminus: MNKKTRIAITGPIGRMGRMLIKEIQNNKHSHLTVAVVQKKHQLIGQDIGRIIGIGEIGVLISDELNIKKNDFDVLIDFTRPAGTLEYLKYCNKFKKNIVIGTTGFSKEEIDIIKSYSQKIAIIIASNFSIGINLLFQLIKKTTQIIGKDSDINILEYHHRNKIDAPSGTALEIGEVISKVMNWNLNQDSIYYQKGITGIRDAKKIGFSIVRAGNIVGKHTVMFSSYDEEIKITHTASNRMSFARGAIQSALWIHKKNTGLFDMTDVLSL.

NAD(+) is bound at residue 11–16; it reads GPIGRM. An NADP(+)-binding site is contributed by Lys-39. Residues 101 to 103 and 125 to 128 contribute to the NAD(+) site; these read GTT and ASNF. His-158 (proton donor/acceptor) is an active-site residue. Residue His-159 participates in (S)-2,3,4,5-tetrahydrodipicolinate binding. Lys-162 acts as the Proton donor in catalysis. 168–169 serves as a coordination point for (S)-2,3,4,5-tetrahydrodipicolinate; that stretch reads GT.

It belongs to the DapB family. As to quaternary structure, homotetramer.

It localises to the cytoplasm. It carries out the reaction (S)-2,3,4,5-tetrahydrodipicolinate + NAD(+) + H2O = (2S,4S)-4-hydroxy-2,3,4,5-tetrahydrodipicolinate + NADH + H(+). The enzyme catalyses (S)-2,3,4,5-tetrahydrodipicolinate + NADP(+) + H2O = (2S,4S)-4-hydroxy-2,3,4,5-tetrahydrodipicolinate + NADPH + H(+). Its pathway is amino-acid biosynthesis; L-lysine biosynthesis via DAP pathway; (S)-tetrahydrodipicolinate from L-aspartate: step 4/4. Its function is as follows. Catalyzes the conversion of 4-hydroxy-tetrahydrodipicolinate (HTPA) to tetrahydrodipicolinate. The polypeptide is 4-hydroxy-tetrahydrodipicolinate reductase (Buchnera aphidicola subsp. Acyrthosiphon pisum (strain APS) (Acyrthosiphon pisum symbiotic bacterium)).